A 3011-amino-acid polypeptide reads, in one-letter code: Genome polyprotein (3011 aa).

Residue Ser-2 is modified to N-acetylserine; by host. Positions 2–23 (STNPKPQKKNKRNTNRRPQDVK) are interaction with STAT1. The interaction with EIF2AK2/PKR stretch occupies residues 2-58 (STNPKPQKKNKRNTNRRPQDVKFPGGGQIVGGVYLLPRRGPRLGVRATRKTSERSQP). Residues 2 to 59 (STNPKPQKKNKRNTNRRPQDVKFPGGGQIVGGVYLLPRRGPRLGVRATRKTSERSQPR) are interaction with DDX3X. The segment at 2-75 (STNPKPQKKN…PKARRPEGRT (74 aa)) is disordered. Topologically, residues 2-168 (STNPKPQKKN…EDGVNYATGN (167 aa)) are cytoplasmic. Short sequence motifs (nuclear localization signal) lie at residues 5–13 (PKPQKKNKR) and 38–43 (PRRGPR). Positions 7-16 (PQKKNKRNTN) are enriched in basic residues. Residues 32–47 (GGVYLLPRRGPRLGVR) show a composition bias toward low complexity. Ser-53 carries the phosphoserine; by host modification. Short sequence motifs (nuclear localization signal) lie at residues 58-64 (PRGRRQP) and 66-71 (PKARRP). Positions 58 to 68 (PRGRRQPIPKA) are enriched in basic residues. Ser-99 is modified (phosphoserine; by host). Positions 112-152 (PRRRSRNLGKVIDTLTCGFADLMGYIPLVGAPLGGAARALA) are important for endoplasmic reticulum and mitochondrial localization. Ser-116 carries the post-translational modification Phosphoserine; by host PKA. The interaction with APOA2 stretch occupies residues 122–173 (VIDTLTCGFADLMGYIPLVGAPLGGAARALAHGVRVLEDGVNYATGNLPGCS). Residues 164–167 (YATG) are important for lipid droplets localization. Residues 169-189 (LPGCSFSIFLLALLSCLTVPA) form a helical membrane-spanning segment. Positions 178–191 (LLALLSCLTVPASA) are cleaved as a propeptide — ER anchor for the core protein, removed in mature form by host signal peptidase. Over 190 to 358 (SAYQVRNSTG…AGAHWGVLAG (169 aa)) the chain is Lumenal. Residues Asn-196, Asn-209, and Asn-234 are each glycosylated (N-linked (GlcNAc...) asparagine; by host). The segment at 265–296 (LVGSATLCSALYVGDLCGSVFLVGQLFTFSPR) is important for fusion. Asn-305 carries an N-linked (GlcNAc...) asparagine; by host glycan. The chain crosses the membrane as a helical span at residues 359–379 (IAYFSMVGNWAKVLVVLLLFA). The Lumenal portion of the chain corresponds to 380–725 (GVDAETHVTG…WEYVVLLFLL (346 aa)). An HVR1 region spans residues 385–411 (THVTGGSAGHTVSGFVSLLAPGAKQNV). N-linked (GlcNAc...) (high mannose) asparagine; by host glycosylation is found at Asn-417, Asn-423, Asn-430, and Asn-448. Cystine bridges form between Cys-429/Cys-552, Cys-452/Cys-459, Cys-486/Cys-494, and Cys-503/Cys-508. The interval 474–480 (YANGSGP) is HVR2. Residue Asn-476 is glycosylated (N-linked (GlcNAc...) asparagine; by host). Residues 481-493 (DQRPYCWHYPPKP) are CD81-binding 1. Residue Asn-532 is glycosylated (N-linked (GlcNAc...) (high mannose) asparagine; by host). The tract at residues 543-551 (RPPLGNWFG) is CD81-binding 2. N-linked (GlcNAc...) (high mannose) asparagine; by host glycosylation occurs at Asn-556. The cysteines at positions 564 and 569 are disulfide-linked. An N-linked (GlcNAc...) (high mannose) asparagine; by host glycan is attached at Asn-576. 3 disulfides stabilise this stretch: Cys-581-Cys-585, Cys-597-Cys-620, and Cys-607-Cys-644. Residues Asn-623 and Asn-645 are each glycosylated (N-linked (GlcNAc...) (high mannose) asparagine; by host). A disulfide bridge connects residues Cys-652 and Cys-677. Residues 660-671 (SELSPLLLTTTQ) form an EIF2AK2/eIF2-alpha phosphorylation homology domain (PePHD) region. A helical transmembrane segment spans residues 726 to 746 (LADARVCSCLWMMLLISQAEA). Residues 747 to 757 (ALENLVILNAA) are Lumenal-facing. A helical membrane pass occupies residues 758-778 (SLAGTHGLVSFLVFFCFAWYL). At 779–781 (KGK) the chain is on the cytoplasmic side. The chain crosses the membrane as a helical span at residues 782–803 (WVPGAVYTFYGMWPLLLLLLAL). The Lumenal portion of the chain corresponds to 804-813 (PQRAYALDTE). The helical transmembrane segment at 814 to 834 (VAASCGGVVLVGLMALTLSPY) threads the bilayer. Residues 835–838 (YKRY) lie on the Cytoplasmic side of the membrane. A helical membrane pass occupies residues 839 to 859 (ISWCLWWLQYFLTRVEAQLHV). Over 860 to 881 (WIPPLNVRGGRDAVILLMCAVH) the chain is Lumenal. Residues 882–902 (PTLVFDITKLLLAVFGPLWIL) form a helical membrane-spanning segment. A Peptidase C18 domain is found at 899-1026 (LWILQASLLK…GMVSKGWRLL (128 aa)). Residues 903–1657 (QASLLKVPYF…CMSADLEVVT (755 aa)) lie on the Cytoplasmic side of the membrane. Residues 904 to 1206 (ASLLKVPYFV…PVENLETTMR (303 aa)) form a protease NS2-3 region. Cys-922 carries S-palmitoyl cysteine; by host lipidation. Residues 929–949 (IGGHYVQMVIIKLGALTGTYV) form an interaction with host SCPS1 region. Residues His-952, Glu-972, and Cys-993 each act as for protease NS2 activity; shared with dimeric partner in the active site. The region spanning 1027–1208 (APITAYAQQT…ENLETTMRSP (182 aa)) is the Peptidase S29 domain. Active-site charge relay system; for serine protease NS3 activity residues include His-1083 and Asp-1107. Residues Cys-1123 and Cys-1125 each contribute to the Zn(2+) site. Catalysis depends on Ser-1165, which acts as the Charge relay system; for serine protease NS3 activity. The Zn(2+) site is built by Cys-1171 and His-1175. One can recognise a Helicase ATP-binding domain in the interval 1217 to 1369 (PVVPQSFQVA…PNIEEVALST (153 aa)). Position 1230 to 1237 (1230 to 1237 (APTGSGKS)) interacts with ATP. Ser-1237 and Glu-1317 together coordinate Mg(2+). The DECH box signature appears at 1316 to 1319 (DECH). The interval 1486 to 1497 (QRRGRTGRGKPG) is RNA-binding. The helical transmembrane segment at 1658–1678 (STWVLVGGVLAALAAYCLSTG) threads the bilayer. Positions 1679 to 1690 (CVVIVGRVVLSG) are NS3-binding. Topologically, residues 1679–1805 (CVVIVGRVVL…AVTSPLTTSQ (127 aa)) are cytoplasmic. The chain crosses the membrane as a helical span at residues 1806–1826 (TLLFNILGGWVAAQLAAPGAA). The Lumenal portion of the chain corresponds to 1827–1828 (TA). A helical transmembrane segment spans residues 1829 to 1849 (FVGAGLAGAAIGSVGLGKVLI). Residues 1833-1861 (GLAGAAIGSVGLGKVLIDILAGYGAGVAG) are glycine zipper. A topological domain (cytoplasmic) is located at residue Asp-1850. Residues 1851–1871 (ILAGYGAGVAGALVAFKIMSG) form a helical membrane-spanning segment. Residues 1872–1881 (EVPSTEDLVN) are Lumenal-facing. Residues 1882–1902 (LLPAILSPGALVVGVVCAAIL) traverse the membrane as a helical segment. Over 1903 to 1972 (RRHVGPGEGA…WISSECTTPC (70 aa)) the chain is Cytoplasmic. S-palmitoyl cysteine; by host attachment occurs at residues Cys-1968 and Cys-1972. An intramembrane segment occupies 1973 to 2003 (SGSWLRDIWDWICEVLSDFKTWLKAKLMPQL). The tract at residues 1978–1998 (RDIWDWICEVLSDFKTWLKAK) is membrane-binding. The Cytoplasmic portion of the chain corresponds to 2004 to 2990 (PGIPFVSCQR…YHSVSHARPR (987 aa)). The tract at residues 2005–2221 (GIPFVSCQRG…KATCTANHDS (217 aa)) is RNA-binding. Residues Cys-2011, Cys-2029, Cys-2031, and Cys-2052 each contribute to the Zn(2+) site. The interval 2120 to 2208 (EFFTELDGVR…ASSSASQLSA (89 aa)) is FKBP8-binding. Residues 2120–2332 (EFFTELDGVR…PVPPPRKKRT (213 aa)) form a transcriptional activation region. The segment at 2135–2139 (PPCKP) is interaction with non-structural protein 4A. The tract at residues 2189 to 2441 (RLARGSPPSV…TPCAAEEQKL (253 aa)) is interaction with host SKP2. Residue Ser-2194 is modified to Phosphoserine; by host; in p56. Residues Ser-2197, Ser-2201, Ser-2204, Ser-2207, and Ser-2210 each carry the phosphoserine; by host; in p58 modification. The ISDR stretch occupies residues 2206-2245 (LSAPSLKATCTANHDSPDAELIEANLLWRQEMGGNITRVE). Residues 2210 to 2275 (SLKATCTANH…REISVPAEIL (66 aa)) are EIF2AK2/PKR-binding. Positions 2249–2306 (KVVILDSFDPLVAEEDEREISVPAEILRKSRRFAQALPVWARPDYNPPLVETWKKPDY) are NS4B-binding. Disordered stretches follow at residues 2312–2334 (HGCPLPPPKSPPVPPPRKKRTVV) and 2351–2408 (SFGS…WSTV). Over residues 2315–2326 (PLPPPKSPPVPP) the composition is skewed to pro residues. The residue at position 2321 (Ser-2321) is a Phosphoserine; by host. Residues 2322-2325 (PPVP) carry the SH3-binding motif. Positions 2326–2334 (PPRKKRTVV) match the Nuclear localization signal motif. The interaction with host IFI27 stretch occupies residues 2332 to 2441 (TVVLTESTLS…TPCAAEEQKL (110 aa)). The segment covering 2351–2369 (SFGSSSTSGITGDNTTTSS) has biased composition (low complexity). Residues 2354-2377 (SSSTSGITGDNTTTSSEPAPSGCP) are V3. 2 positions are modified to phosphoserine; by host: Ser-2449 and Ser-2462. A RdRp catalytic domain is found at 2634–2752 (PMGFSYDTRC…ICESAGVQED (119 aa)). The Mg(2+) site is built by Asp-2640, Asp-2738, and Asp-2739. The chain crosses the membrane as a helical span at residues 2991–3011 (WIWFCLLLLAAGVGIYLLPNR).

Belongs to the hepacivirus polyprotein family. In terms of assembly, homooligomer. Interacts with E1 (via C-terminus). Interacts with the non-structural protein 5A. Interacts (via N-terminus) with host STAT1 (via SH2 domain); this interaction results in decreased STAT1 phosphorylation and ubiquitin-mediated proteasome-dependent STAT1 degradation, leading to decreased IFN-stimulated gene transcription. Interacts with host STAT3; this interaction constitutively activates STAT3. Interacts with host LTBR receptor. Interacts with host TNFRSF1A receptor and possibly induces apoptosis. Interacts with host HNRPK. Interacts with host YWHAE. Interacts with host UBE3A/E6AP. Interacts with host DDX3X. Interacts with host APOA2. Interacts with host RXRA protein. Interacts with host SP110 isoform 3/Sp110b; this interaction sequesters the transcriptional corepressor SP110 away from the nucleus. Interacts with host CREB3 nuclear transcription protein; this interaction triggers cell transformation. Interacts with host ACY3. Interacts with host C1QR1. Interacts with host RBM24; this interaction, which enhances the interaction of the mature core protein with 5'-UTR, may inhibit viral translation and favor replication. Interacts with host EIF2AK2/PKR; this interaction induces the autophosphorylation of EIF2AK2. Part of the viral assembly initiation complex composed of NS2, E1, E2, NS3, NS4A, NS5A and the mature core protein. As to quaternary structure, forms a heterodimer with envelope glycoprotein E2. Interacts with mature core protein. Interacts with protease NS2. The heterodimer E1/E2 interacts with host CLDN1; this interaction plays a role in viral entry into host cell. Interacts with host SPSB2 (via C-terminus). Part of the viral assembly initiation complex composed of NS2, E1, E2, NS3, NS4A, NS5A and the mature core protein. Interacts with host NEURL3; this interaction prevents E1 binding to glycoprotein E2. Forms a heterodimer with envelope glycoprotein E1. Interacts with host CD81 and SCARB1 receptors; these interactions play a role in viral entry into host cell. Interacts with host EIF2AK2/PKR; this interaction inhibits EIF2AK2 and probably allows the virus to evade the innate immune response. Interacts with host CD209/DC-SIGN and CLEC4M/DC-SIGNR. Interact with host SPCS1; this interaction is essential for viral particle assembly. Interacts with protease NS2. The heterodimer E1/E2 interacts with host CLDN1; this interaction plays a role in viral entry into host cell. Part of the viral assembly initiation complex composed of NS2, E1, E2, NS3, NS4A, NS5A and the mature core protein. Interacts with host SLC3A2/4F2hc; the interaction may facilitate viral entry into host cell. Interacts with human PLSCR1. In terms of assembly, homohexamer. Homoheptamer. Interacts with protease NS2. As to quaternary structure, homodimer. Interacts with host SPCS1; this interaction is essential for viral particle assembly. Interacts with envelope glycoprotein E1. Interacts with envelope glycoprotein E2. Interacts with viroporin p7. Interacts with serine protease/helicase NS3. Part of the replication complex composed of NS2, NS3, NS4A, NS4B, NS5A and the RNA-directed RNA polymerase embedded in an ER-derived membranous web. Part of the viral assembly initiation complex composed of NS2, E1, E2, NS3, NS4A, NS5A and the mature core protein. Interacts with protease NS2. Interacts with non-structural protein 4A; this interaction stabilizes the folding of NS3 serine protease. NS3-NS4A interaction is essential for NS3 activation and allows membrane anchorage of the latter. NS3/NS4A complex also prevents phosphorylation of host IRF3, thus preventing the establishment of dsRNA induced antiviral state. Interacts with host MAVS; this interaction leads to the cleavage and inhibition of host MAVS. Interacts with host TICAM1; this interaction leads to the cleavage and inhibition of host TICAM1. Interacts with host TANK-binding kinase/TBK1; this interaction results in the inhibition of the association between TBK1 and IRF3, which leads to the inhibition of IRF3 activation. Interacts with host RBM24. Part of the replication complex composed of NS2, NS3, NS4A, NS4B, NS5A and the RNA-directed RNA polymerase embedded in an ER-derived membranous web. Part of the viral assembly initiation complex composed of NS2, E1, E2, NS3, NS4A, NS5A and the mature core protein. In terms of assembly, interacts with NS3 serine protease; this interaction stabilizes the folding of NS3 serine protease. NS3-NS4A interaction is essential for NS3 activation and allows membrane anchorage of the latter. Interacts with non-structural protein 5A (via N-terminus). Part of the replication complex composed of NS2, NS3, NS4A, NS4B, NS5A and the RNA-directed RNA polymerase embedded in an ER-derived membranous web. Part of the viral assembly initiation complex composed of NS2, E1, E2, NS3, NS4A, NS5A and the mature core protein. As to quaternary structure, homomultimer. Interacts with non-structural protein NS5A. Interacts with host PLA2G4C; this interaction likely initiates the recruitment of replication complexes to lipid droplets. Interacts with host STING; this interaction disrupts the interaction between STING and TBK1 thereby suppressing the interferon signaling. Part of the replication complex composed of NS2, NS3, NS4A, NS4B, NS5A and the RNA-directed RNA polymerase embedded in an ER-derived membranous web. Monomer. Homodimer; dimerization is required for RNA-binding. Interacts with mature core protein. Interacts (via N-terminus) with non-structural protein 4A. Interacts with non-structural protein 4B. Interacts with RNA-directed RNA polymerase. Part of the viral assembly initiation complex composed of NS2, E1, E2, NS3, NS4A, NS5A and the mature core protein. Part of the replication complex composed of NS2, NS3, NS4A, NS4B, NS5A and the RNA-directed RNA polymerase. Interacts with host GRB2. Interacts with host BIN1. Interacts with host PIK3R1. Interacts with host SRCAP. Interacts with host FKBP8. Interacts with host VAPB. Interacts with host EIF2AK2/PKR; this interaction leads to disruption of EIF2AK2 dimerization by NS5A and probably allows the virus to evade the innate immune response. Interacts (via N-terminus) with host PACSIN2 (via N-terminus); this interaction attenuates protein kinase C alpha-mediated phosphorylation of PACSIN2 by disrupting the interaction between PACSIN2 and PRKCA. Interacts (via N-terminus) with host SRC kinase (via SH2 domain). Interacts with most Src-family kinases. Interacts with host IFI27 and SKP2; promotes the ubiquitin-mediated proteasomal degradation of NS5A. Interacts with host GPS2. Interacts with host TNFRSF21; this interaction allows the modulation by the virus of JNK, p38 MAPK, STAT3, and Akt signaling pathways in a DR6-dependent manner. Interacts (via N-terminus) with host CIDEB (via N-terminus); this interaction seems to regulate the association of HCV particles with APOE. Interacts with host CHKA/Choline Kinase-alpha; CHKA bridges host PI4KA and NS5A and potentiates NS5A-stimulated PI4KA activity, which then facilitates the targeting of the ternary complex to the ER for viral replication. Interacts with host SPSB2 (via C-terminus); this interaction targets NS5A for ubiquitination and degradation. Interacts with host RAB18; this interaction may promote the association of NS5A and other replicase components with lipid droplets. Interacts with host TRIM14; this interaction induces the degradation of NS5A. In terms of assembly, homooligomer. Interacts with non-structural protein 5A. Interacts with host VAPB. Interacts with host PRK2/PKN2. Interacts with host HNRNPA1 and SEPT6; these interactions facilitate viral replication. Part of the replication complex composed of NS2, NS3, NS4A, NS4B, NS5A and the RNA-directed RNA polymerase. Initiates RNA transcription/replication at a flavin adenine dinucleotide (FAD), resulting in a 5'- FAD cap on viral RNAs. In this way, recognition of viral 5' RNA by host pattern recognition receptors can be bypassed, thereby evading activation of antiviral pathways. Requires Zn(2+) as cofactor. Mg(2+) is required as a cofactor. Specific enzymatic cleavages in vivo yield mature proteins. The structural proteins, core, E1, E2 and p7 are produced by proteolytic processing by host signal peptidases. The core protein precursor is synthesized as a 23 kDa protein which is retained in the ER membrane through the hydrophobic signal peptide. Cleavage by the signal peptidase releases the 21 kDa mature core protein. The cleavage of the core protein precursor occurs between aminoacids 176 and 188 but the exact cleavage site is not known. Some degraded forms of the core protein appear as well during the course of infection. The other proteins (p7, NS2, NS3, NS4A, NS4B, NS5A and NS5B) are cleaved by the viral proteases. Autoprocessing between NS2 and NS3 is mediated by the NS2 cysteine protease catalytic domain and regulated by the NS3 N-terminal domain. Post-translationally, phosphorylated by host PKC and PKA. In terms of processing, ubiquitinated; mediated by UBE3A and leading to core protein subsequent proteasomal degradation. Highly N-glycosylated. Post-translationally, palmitoylation is required for NS2/3 autoprocessing and E2 recruitment to membranes. In terms of processing, palmitoylated. This modification may play a role in its polymerization or in protein-protein interactions. Cleaved by host caspases which are probably activated by the viral infection. Post-translationally, ubiquitinated. Ubiquitination, most probably at Lys-2350, mediated by host IFI27 and SKP2 leads to proteasomal degradation, restricting viral infection. In terms of processing, phosphorylated on serines in a basal form termed p56. p58 is a hyperphosphorylated form of p56. p56 and p58 coexist in the cell in roughly equivalent amounts. Hyperphosphorylation is dependent on the presence of NS4A. Host CSNK1A1/CKI-alpha or RPS6KB1 kinases may be responsible for NS5A phosphorylation. Phosphorylated NS5A is involved in viral replication. Tyrosine phosphorylation is essential for the interaction with host SRC. Post-translationally, the N-terminus is phosphorylated by host PRK2/PKN2.

The protein localises to the host endoplasmic reticulum membrane. It localises to the host mitochondrion membrane. It is found in the virion. Its subcellular location is the host cytoplasm. The protein resides in the host nucleus. The protein localises to the host lipid droplet. It localises to the virion membrane. It is found in the host mitochondrion. Its subcellular location is the host cell membrane. The protein resides in the host perinuclear region. It carries out the reaction Hydrolysis of four peptide bonds in the viral precursor polyprotein, commonly with Asp or Glu in the P6 position, Cys or Thr in P1 and Ser or Ala in P1'.. The catalysed reaction is a ribonucleoside 5'-triphosphate + H2O = a ribonucleoside 5'-diphosphate + phosphate + H(+). The enzyme catalyses ATP + H2O = ADP + phosphate + H(+). It catalyses the reaction RNA(n) + a ribonucleoside 5'-triphosphate = RNA(n+1) + diphosphate. Its activity is regulated as follows. Inhibited by the antiviral drug hexamethylene amiloride. Inhibition by amantadine appears to be genotype-dependent. Also inhibited by long-alkyl-chain iminosugar derivatives. Activity is up-regulated by PRK2/PKN2-mediated phosphorylation. Functionally, packages viral RNA to form a viral nucleocapsid, and promotes virion budding. Participates in the viral particle production as a result of its interaction with the non-structural protein 5A. Binds RNA and may function as a RNA chaperone to induce the RNA structural rearrangements taking place during virus replication. Modulates viral translation initiation by interacting with viral IRES and 40S ribosomal subunit. Affects various cell signaling pathways, host immunity and lipid metabolism. Prevents the establishment of cellular antiviral state by blocking the interferon-alpha/beta (IFN-alpha/beta) and IFN-gamma signaling pathways and by blocking the formation of phosphorylated STAT1 and promoting ubiquitin-mediated proteasome-dependent degradation of STAT1. Activates STAT3 leading to cellular transformation. Regulates the activity of cellular genes, including c-myc and c-fos. May repress the promoter of p53, and sequester CREB3 and SP110 isoform 3/Sp110b in the cytoplasm. Represses cell cycle negative regulating factor CDKN1A, thereby interrupting an important check point of normal cell cycle regulation. Targets transcription factors involved in the regulation of inflammatory responses and in the immune response: suppresses TNF-induced NF-kappa-B activation, and activates AP-1. Binds to dendritic cells (DCs) via C1QR1, resulting in down-regulation of T-lymphocytes proliferation. Alters lipid metabolism by interacting with hepatocellular proteins involved in lipid accumulation and storage. Induces up-regulation of FAS promoter activity, and thereby contributes to the increased triglyceride accumulation in hepatocytes (steatosis). Its function is as follows. Forms a heterodimer with envelope glycoprotein E2, which mediates virus attachment to the host cell, virion internalization through clathrin-dependent endocytosis and fusion with host membrane. Fusion with the host cell is most likely mediated by both E1 and E2, through conformational rearrangements of the heterodimer required for fusion rather than a classical class II fusion mechanism. E1/E2 heterodimer binds host apolipoproteins such as APOB and APOE thereby forming a lipo-viro-particle (LVP). APOE associated to the LVP allows the initial virus attachment to cell surface receptors such as the heparan sulfate proteoglycans (HSPGs), syndecan-1 (SDC1), syndecan-1 (SDC2), the low-density lipoprotein receptor (LDLR) and scavenger receptor class B type I (SCARB1). The cholesterol transfer activity of SCARB1 allows E2 exposure and binding of E2 to SCARB1 and the tetraspanin CD81. E1/E2 heterodimer binding on CD81 activates the epithelial growth factor receptor (EGFR) signaling pathway. Diffusion of the complex E1-E2-EGFR-SCARB1-CD81 to the cell lateral membrane allows further interaction with Claudin 1 (CLDN1) and occludin (OCLN) to finally trigger HCV entry. In terms of biological role, forms a heterodimer with envelope glycoprotein E1, which mediates virus attachment to the host cell, virion internalization through clathrin-dependent endocytosis and fusion with host membrane. Fusion with the host cell is most likely mediated by both E1 and E2, through conformational rearrangements of the heterodimer required for fusion rather than a classical class II fusion mechanism. The interaction between envelope glycoprotein E2 and host apolipoprotein E/APOE allows the proper assembly, maturation and infectivity of the viral particles. This interaction is probably promoted via the up-regulation of cellular autophagy by the virus. E1/E2 heterodimer binds host apolipoproteins such as APOB and APOE thereby forming a lipo-viro-particle (LVP). APOE associated to the LVP allows the initial virus attachment to cell surface receptors such as the heparan sulfate proteoglycans (HSPGs), syndecan-1 (SDC1), syndecan-1 (SDC2), the low-density lipoprotein receptor (LDLR) and scavenger receptor class B type I (SCARB1). The cholesterol transfer activity of SCARB1 allows E2 exposure and binding of E2 to SCARB1 and the tetraspanin CD81. E1/E2 heterodimer binding on CD81 activates the epithelial growth factor receptor (EGFR) signaling pathway. Diffusion of the complex E1-E2-EGFR-SCARB1-CD81 to the cell lateral membrane allows further interaction with Claudin 1 (CLDN1) and occludin (OCLN) to finally trigger HCV entry. Inhibits host EIF2AK2/PKR activation, preventing the establishment of an antiviral state. Viral ligand for CD209/DC-SIGN and CLEC4M/DC-SIGNR, which are respectively found on dendritic cells (DCs), and on liver sinusoidal endothelial cells and macrophage-like cells of lymph node sinuses. These interactions allow the capture of circulating HCV particles by these cells and subsequent facilitated transmission to permissive cells such as hepatocytes and lymphocyte subpopulations. The interaction between E2 and host amino acid transporter complex formed by SLC3A2 and SLC7A5/LAT1 may facilitate viral entry into host cell. Ion channel protein that acts as a viroporin and plays an essential role in the assembly, envelopment and secretion of viral particles. Regulates the host cell secretory pathway, which induces the intracellular retention of viral glycoproteins and favors assembly of viral particles. Creates a pore in acidic organelles and releases Ca(2+) and H(+) in the cytoplasm of infected cells, leading to a productive viral infection. High levels of cytoplasmic Ca(2+) may trigger membrane trafficking and transport of viral ER-associated proteins to viroplasms, sites of viral genome replication. This ionic imbalance induces the assembly of the inflammasome complex, which triggers the maturation of pro-IL-1beta into IL-1beta through the action of caspase-1. Targets also host mitochondria and induces mitochondrial depolarization. In addition of its role as a viroporin, acts as a lipid raft adhesion factor. Functionally, cysteine protease required for the proteolytic auto-cleavage between the non-structural proteins NS2 and NS3. The N-terminus of NS3 is required for the function of NS2 protease (active region NS2-3). Promotes the initiation of viral particle assembly by mediating the interaction between structural and non-structural proteins. Its function is as follows. Displays three enzymatic activities: serine protease with a chymotrypsin-like fold, NTPase and RNA helicase. NS3 serine protease, in association with NS4A, is responsible for the cleavages of NS3-NS4A, NS4A-NS4B, NS4B-NS5A and NS5A-NS5B. The NS3/NS4A complex prevents phosphorylation of host IRF3, thus preventing the establishment of dsRNA induced antiviral state. The NS3/NS4A complex induces host amino acid transporter component SLC3A2, thus contributing to HCV propagation. NS3 RNA helicase binds to RNA and unwinds both dsDNA and dsRNA in the 3' to 5' direction, and likely resolves RNA complicated stable secondary structures in the template strand. Binds a single ATP and catalyzes the unzipping of a single base pair of dsRNA. Inhibits host antiviral proteins TBK1 and IRF3 thereby preventing the establishment of an antiviral state. Cleaves host MAVS/CARDIF thereby preventing the establishment of an antiviral state. Cleaves host TICAM1/TRIF, thereby disrupting TLR3 signaling and preventing the establishment of an antiviral state. In terms of biological role, the NS3/NS4A complex prevents phosphorylation of host IRF3, thus preventing the establishment of dsRNA induced antiviral state. The NS3/NS4A complex induces host amino acid transporter component SLC3A2, thus contributing to HCV propagation. Induces a specific membrane alteration that serves as a scaffold for the virus replication complex. This membrane alteration gives rise to the so-called ER-derived membranous web that contains the replication complex. NS4B self-interaction contributes to its function in membranous web formation. Promotes host TRIF protein degradation in a CASP8-dependent manner thereby inhibiting host TLR3-mediated interferon signaling. Disrupts the interaction between STING and TBK1 contributing to the inhibition of interferon signaling. Functionally, phosphorylated protein that is indispensable for viral replication and assembly. Both hypo- and hyperphosphorylated states are required for the viral life cycle. The hyperphosphorylated form of NS5A is an inhibitor of viral replication. Involved in RNA-binding and especially in binding to the viral genome. Zinc is essential for RNA-binding. Participates in the viral particle production as a result of its interaction with the mature viral core protein. Its interaction with host VAPB may target the viral replication complex to vesicles. Down-regulates viral IRES translation initiation. Mediates interferon resistance, presumably by interacting with and inhibiting host EIF2AK2/PKR. Prevents BIN1-induced apoptosis. Acts as a transcriptional activator of some host genes important for viral replication when localized in the nucleus. Via the interaction with host PACSIN2, modulates lipid droplet formation in order to promote virion assembly. Modulates TNFRSF21/DR6 signaling pathway for viral propagation. Its function is as follows. RNA-dependent RNA polymerase that performs primer-template recognition and RNA synthesis during viral replication. Initiates RNA transcription/replication at a flavin adenine dinucleotide (FAD), resulting in a 5'- FAD cap on viral RNAs. In this way, recognition of viral 5' RNA by host pattern recognition receptors can be bypassed, thereby evading activation of antiviral pathways. This is Genome polyprotein from Homo sapiens (Human).